A 212-amino-acid chain; its full sequence is Endothelin-1 (212 aa).

An N-terminal signal peptide occupies residues 1–17; the sequence is MDYLLMIFSLLFVACQG. Positions 18–50 are excised as a propeptide; sequence APETAVLGAELSAVGENGGEKPTPSPPWRLRRS. Cystine bridges form between C53-C67 and C55-C63. A propeptide spanning residues 74-212 is cleaved from the precursor; the sequence is VNTPEHVVPY…RYVTHNRAHW (139 aa). Residues 109-123 are endothelin-like; the sequence is CQCASQKDKKCWNFC. Composition is skewed to basic and acidic residues over residues 168–181 and 189–205; these read RSSEEHLRQTRSET and SFHDPKLKGKPSRERYV. A disordered region spans residues 168 to 212; it reads RSSEEHLRQTRSETMRNSVKSSFHDPKLKGKPSRERYVTHNRAHW.

Belongs to the endothelin/sarafotoxin family. As to expression, expressed in lung, placental stem villi vessels and in cultured placental vascular smooth muscle cells.

It is found in the secreted. Its function is as follows. Endothelins are endothelium-derived vasoconstrictor peptides. Probable ligand for G-protein coupled receptors EDNRA and EDNRB which activates PTK2B, BCAR1, BCAR3 and, GTPases RAP1 and RHOA cascade in glomerular mesangial cells. Also binds the DEAR/FBXW7-AS1 receptor. Promotes mesenteric arterial wall remodeling via activation of ROCK signaling and subsequent colocalization of NFATC3 with F-actin filaments. NFATC3 then translocates to the nucleus where it subsequently promotes the transcription of the smooth muscle hypertrophy and differentiation marker ACTA2. The polypeptide is Endothelin-1 (EDN1) (Homo sapiens (Human)).